We begin with the raw amino-acid sequence, 307 residues long: UDP-N-acetylenolpyruvoylglucosamine reductase (307 aa).

The 165-residue stretch at Thr33–Gly197 folds into the FAD-binding PCMH-type domain. The active site involves Arg176. The active-site Proton donor is Ser226. Glu296 is an active-site residue.

The protein belongs to the MurB family. FAD is required as a cofactor.

It is found in the cytoplasm. It catalyses the reaction UDP-N-acetyl-alpha-D-muramate + NADP(+) = UDP-N-acetyl-3-O-(1-carboxyvinyl)-alpha-D-glucosamine + NADPH + H(+). It participates in cell wall biogenesis; peptidoglycan biosynthesis. Its function is as follows. Cell wall formation. The polypeptide is UDP-N-acetylenolpyruvoylglucosamine reductase (Staphylococcus aureus (strain MRSA252)).